The sequence spans 690 residues: eEF1A lysine and N-terminal methyltransferase (690 aa).

The tract at residues 427-451 (AAASSASKKKNKKKAKQPASTGAKD) is disordered. Basic residues predominate over residues 433–442 (SKKKNKKKAK).

Belongs to the methyltransferase superfamily.

The catalysed reaction is L-lysyl-[protein] + S-adenosyl-L-methionine = N(6)-methyl-L-lysyl-[protein] + S-adenosyl-L-homocysteine + H(+). The enzyme catalyses N(6)-methyl-L-lysyl-[protein] + S-adenosyl-L-methionine = N(6),N(6)-dimethyl-L-lysyl-[protein] + S-adenosyl-L-homocysteine + H(+). It carries out the reaction N-terminal glycyl-L-lysyl-L-glutamyl-[protein] + 3 S-adenosyl-L-methionine = N-terminal N,N,N-trimethyl-glycyl-L-lysyl-L-glutamyl-[protein] + 3 S-adenosyl-L-homocysteine + 3 H(+). Dual methyltransferase that catalyzes methylation of elongation factor 1-alpha (eef1a1 and eef1a2) at two different positions, and is therefore involved in the regulation of mRNA translation. Via its C-terminus, methylates the N-terminus of eef1a1 and eef1a2. Via its N-terminus dimethylates lysine residues of eef1a1 and eef1a2. The polypeptide is eEF1A lysine and N-terminal methyltransferase (mettl13) (Danio rerio (Zebrafish)).